The following is a 253-amino-acid chain: AA9 family lytic polysaccharide monooxygenase F (253 aa).

The N-terminal stretch at 1–16 is a signal peptide; the sequence is MKVLATLLASVGLVAA. A Cu(2+)-binding site is contributed by H17. N22 carries N-linked (GlcNAc...) asparagine glycosylation. Cystine bridges form between C75/C193 and C163/C253. Residue H105 coordinates Cu(2+). N143 carries an N-linked (GlcNAc...) asparagine glycan. H179 and Q188 together coordinate O2. Residue Y190 coordinates Cu(2+).

It belongs to the polysaccharide monooxygenase AA9 family. Cu(2+) serves as cofactor.

The protein localises to the secreted. The enzyme catalyses [(1-&gt;4)-beta-D-glucosyl]n+m + reduced acceptor + O2 = 4-dehydro-beta-D-glucosyl-[(1-&gt;4)-beta-D-glucosyl]n-1 + [(1-&gt;4)-beta-D-glucosyl]m + acceptor + H2O.. In terms of biological role, lytic polysaccharide monooxygenase (LPMO) that depolymerizes crystalline and amorphous polysaccharides via the oxidation of scissile alpha- or beta-(1-4)-glycosidic bonds, yielding C1 or C4 oxidation products. Catalysis by LPMOs requires the reduction of the active-site copper from Cu(II) to Cu(I) by a reducing agent and H(2)O(2) or O(2) as a cosubstrate. This chain is AA9 family lytic polysaccharide monooxygenase F, found in Podospora anserina (strain S / ATCC MYA-4624 / DSM 980 / FGSC 10383) (Pleurage anserina).